Consider the following 492-residue polypeptide: RNA helicase CrhR (492 aa).

Positions 7–35 (STFADLGLSEKRCQLLADIGFEAPTQIQT) match the Q motif motif. Residues 38-207 (IPLLLSGRDM…NQFLNDPALV (170 aa)) form the Helicase ATP-binding domain. 51-58 (SQTGTGKT) is a binding site for ATP. A DEAD box motif is present at residues 155 to 158 (DEAD). In terms of domain architecture, Helicase C-terminal spans 234–379 (KALQPILEME…VCTIPNRSQV (146 aa)). Residues 451-492 (VLRRGRNAGGGQNKSGGGYQGKPGKPRRSSGGRRPAYSDRQQ) form a disordered region. Positions 457-471 (NAGGGQNKSGGGYQG) are enriched in gly residues.

It belongs to the DEAD box helicase family.

The protein localises to the cytoplasm. The protein resides in the cell inner membrane. It localises to the cellular thylakoid membrane. It carries out the reaction ATP + H2O = ADP + phosphate + H(+). Helicase inhibited by the slowly-hydrolyzing ATP analog ATP-gamma-S. Protein is rapidly degraded upon shifting from 20 to 30 degrees Celsius, the degradation machinery is only transiently present in cells grown at 30 degrees Celsius, is inhibited by commercial protease inhibitors and requires full-length protein expression (the N-terminal fragment does not induce proteolysis although it can be degraded by wild-type extract). In terms of biological role, an ATP-dependent bidirectional RNA helicase with RNA-dependent ATPase activity; does not unwind dsDNA, uses only (d)ATP. Also has ATP-dependent RNA annealing activity; concurrent annealing and helicase activity promote strand-exchange activity. In vitro has low helicase processivity, annealing processivity is probably higher. Required for correct cold adaptation, probably by aiding translation of mRNAs required for photosynthesis and electron transport. Probably regulates the cold-shock-inducible expression of the GroESL chaperones. May partially regulate its own expression at both the transcriptional and post-transcriptional level (experiments used a construct expressing a 25 kDa trunacted protein which might have dominant-negative effects); is probably not directly involved in the pathway responsible for mRNA degradation. This Synechocystis sp. (strain ATCC 27184 / PCC 6803 / Kazusa) protein is RNA helicase CrhR.